A 472-amino-acid polypeptide reads, in one-letter code: Argininosuccinate lyase (472 aa).

It belongs to the lyase 1 family. Argininosuccinate lyase subfamily.

Its subcellular location is the cytoplasm. The catalysed reaction is 2-(N(omega)-L-arginino)succinate = fumarate + L-arginine. It participates in amino-acid biosynthesis; L-arginine biosynthesis; L-arginine from L-ornithine and carbamoyl phosphate: step 3/3. This chain is Argininosuccinate lyase, found in Cupriavidus necator (strain ATCC 17699 / DSM 428 / KCTC 22496 / NCIMB 10442 / H16 / Stanier 337) (Ralstonia eutropha).